The primary structure comprises 63 residues: ATP synthase F(0) complex subunit 8 (63 aa).

The helical transmembrane segment at 8-24 (TWFLTILSVMLTLFTLL) threads the bilayer. Lysine 57 bears the N6-acetyllysine mark.

The protein belongs to the ATPase protein 8 family. In terms of assembly, component of the ATP synthase complex composed at least of ATP5F1A/subunit alpha, ATP5F1B/subunit beta, ATP5MC1/subunit c (homooctomer), MT-ATP6/subunit a, MT-ATP8/subunit 8, ATP5ME/subunit e, ATP5MF/subunit f, ATP5MG/subunit g, ATP5MK/subunit k, ATP5MJ/subunit j, ATP5F1C/subunit gamma, ATP5F1D/subunit delta, ATP5F1E/subunit epsilon, ATP5PF/subunit F6, ATP5PB/subunit b, ATP5PD/subunit d, ATP5PO/subunit OSCP. ATP synthase complex consists of a soluble F(1) head domain (subunits alpha(3) and beta(3)) - the catalytic core - and a membrane F(0) domain - the membrane proton channel (subunits c, a, 8, e, f, g, k and j). These two domains are linked by a central stalk (subunits gamma, delta, and epsilon) rotating inside the F1 region and a stationary peripheral stalk (subunits F6, b, d, and OSCP). Interacts with PRICKLE3.

Its subcellular location is the mitochondrion membrane. Subunit 8, of the mitochondrial membrane ATP synthase complex (F(1)F(0) ATP synthase or Complex V) that produces ATP from ADP in the presence of a proton gradient across the membrane which is generated by electron transport complexes of the respiratory chain. ATP synthase complex consist of a soluble F(1) head domain - the catalytic core - and a membrane F(1) domain - the membrane proton channel. These two domains are linked by a central stalk rotating inside the F(1) region and a stationary peripheral stalk. During catalysis, ATP synthesis in the catalytic domain of F(1) is coupled via a rotary mechanism of the central stalk subunits to proton translocation. In vivo, can only synthesize ATP although its ATP hydrolase activity can be activated artificially in vitro. Part of the complex F(0) domain. This Physeter macrocephalus (Sperm whale) protein is ATP synthase F(0) complex subunit 8.